A 341-amino-acid chain; its full sequence is DNA-directed RNA polymerase subunit alpha (341 aa).

The tract at residues 1–233 (MLKDGTSVSN…DLLSPFLHTK (233 aa)) is alpha N-terminal domain (alpha-NTD). Residues 262–341 (SEGDFFKNTF…NEKPRVVGDE (80 aa)) are alpha C-terminal domain (alpha-CTD).

It belongs to the RNA polymerase alpha chain family. In terms of assembly, in plastids the minimal PEP RNA polymerase catalytic core is composed of four subunits: alpha, beta, beta', and beta''. When a (nuclear-encoded) sigma factor is associated with the core the holoenzyme is formed, which can initiate transcription.

The protein resides in the plastid. Its subcellular location is the chloroplast. The catalysed reaction is RNA(n) + a ribonucleoside 5'-triphosphate = RNA(n+1) + diphosphate. Its function is as follows. DNA-dependent RNA polymerase catalyzes the transcription of DNA into RNA using the four ribonucleoside triphosphates as substrates. This Marsilea quadrifolia (European water clover) protein is DNA-directed RNA polymerase subunit alpha.